Consider the following 97-residue polypeptide: Small ribosomal subunit protein uS17 (97 aa).

Residues 1-20 (MSEATVNDNAAVKNEKGARK) are disordered.

It belongs to the universal ribosomal protein uS17 family. As to quaternary structure, part of the 30S ribosomal subunit.

Its function is as follows. One of the primary rRNA binding proteins, it binds specifically to the 5'-end of 16S ribosomal RNA. In Corynebacterium jeikeium (strain K411), this protein is Small ribosomal subunit protein uS17.